Consider the following 68-residue polypeptide: Large ribosomal subunit protein bL35 (68 aa).

Basic residues-rich tracts occupy residues 1–15 (MPKMKSHSGTKKRFK) and 23–38 (TARKAGKRHLNEHKSS). The segment at 1–38 (MPKMKSHSGTKKRFKVTGSGKVTARKAGKRHLNEHKSS) is disordered.

Belongs to the bacterial ribosomal protein bL35 family.

This Cutibacterium acnes (strain DSM 16379 / KPA171202) (Propionibacterium acnes) protein is Large ribosomal subunit protein bL35.